A 170-amino-acid polypeptide reads, in one-letter code: MVPAQHRPPDRPGDPAHDPGRGRRLGIDVGAARIGVACSDPDAILATPVETVRRDRSGKHLRRLAALAAELEAVEVIVGLPRTLADRIGRSAQDAIELAEALARRVSPTPVRLADERLTTVSAQRSLRQAGVRASEQRAVIDQAAAVAILQSWLDERLAAMAGTQEGSDA.

The segment at 1–25 (MVPAQHRPPDRPGDPAHDPGRGRRL) is disordered. Basic and acidic residues predominate over residues 7–21 (RPPDRPGDPAHDPGR).

It belongs to the YqgF nuclease family.

The protein resides in the cytoplasm. In terms of biological role, could be a nuclease involved in processing of the 5'-end of pre-16S rRNA. In Mycobacterium tuberculosis (strain ATCC 25177 / H37Ra), this protein is Putative pre-16S rRNA nuclease.